A 96-amino-acid polypeptide reads, in one-letter code: Co-chaperonin GroES (96 aa).

The protein belongs to the GroES chaperonin family. Heptamer of 7 subunits arranged in a ring. Interacts with the chaperonin GroEL.

It is found in the cytoplasm. In terms of biological role, together with the chaperonin GroEL, plays an essential role in assisting protein folding. The GroEL-GroES system forms a nano-cage that allows encapsulation of the non-native substrate proteins and provides a physical environment optimized to promote and accelerate protein folding. GroES binds to the apical surface of the GroEL ring, thereby capping the opening of the GroEL channel. This chain is Co-chaperonin GroES, found in Shewanella amazonensis (strain ATCC BAA-1098 / SB2B).